Here is a 533-residue protein sequence, read N- to C-terminus: RNA end formation protein 2 (533 aa).

3 disordered regions span residues 187-254 (SNST…SSMK), 260-279 (LFNK…SKKK), and 321-344 (SSST…PLKK). The span at 206 to 222 (KIKDSEKEKEKEKDKSK) shows a compositional bias: basic and acidic residues. The span at 242–252 (SSPSPTASTSS) shows a compositional bias: low complexity. The segment covering 321–338 (SSSTSGSSTTTVATPASS) has biased composition (low complexity).

In terms of assembly, interacts with FIR1. Component of the cleavage and polyadenylation factor (CPF) complex, which is composed of PTI1, SYC1, SSU72, GLC7, MPE1, REF2, PFS2, PTA1, YSH1/BRR5, SWD2, CFT2/YDH1, YTH1, CFT1/YHH1, FIP1 and PAP1. Component of the APT complex, which is a subcomplex of CPF, and is composed of PTI1, SYC1, SSU72, GLC7, REF2, PTA1 and SWD2.

It localises to the nucleus. RNA-binding component of the cleavage and polyadenylation factor (CPF) complex, which plays a key role in polyadenylation-dependent pre-mRNA 3'-end formation and cooperates with cleavage factors including the CFIA complex and NAB4/CFIB. Negative regulator of poly(A) synthesis. Component of the APT complex, which may be involved in polyadenylation-independent transcript 3'-end formation. REF2 is required for 3'-end formation of snoRNAs. This chain is RNA end formation protein 2 (REF2), found in Saccharomyces cerevisiae (strain ATCC 204508 / S288c) (Baker's yeast).